Reading from the N-terminus, the 369-residue chain is MFAPLQNDTFLRACLRQATDYTPVWLMRQAGRYLPEYRATRARAGSFMGLATNTDYATEVTLQPLERYPLDAAILFSDILTVPDAMGLGLSFALGEGPRFATPVRDEAAVARLEVPDMGKLRYVFDAVTSIRKALNGRVPLIGFSGSPWTLACYMVEGAGSDDYRLVKTMLYQRPDLMHKMLAVNADAVAAYLNAQIEAGAQAVMIFDSWGGVLADAAFQTFSLAYTARVLGQLKREHDGVKIPRLVFTKGGGQWLQAMAALDCEVLGLDWTVNLAQARARVGENGPHAKALQGNLDPNVLFASPAQIETEVAAVLDSFGRPHLDSSQPGPTHIFNLGHGISQHTPPESVEVLVNAVHTHSRSMRAVRT.

Substrate contacts are provided by residues 28–32 (RQAGR), D78, Y154, S209, and H339.

The protein belongs to the uroporphyrinogen decarboxylase family. As to quaternary structure, homodimer.

The protein resides in the cytoplasm. The enzyme catalyses uroporphyrinogen III + 4 H(+) = coproporphyrinogen III + 4 CO2. It functions in the pathway porphyrin-containing compound metabolism; protoporphyrin-IX biosynthesis; coproporphyrinogen-III from 5-aminolevulinate: step 4/4. In terms of biological role, catalyzes the decarboxylation of four acetate groups of uroporphyrinogen-III to yield coproporphyrinogen-III. The polypeptide is Uroporphyrinogen decarboxylase (Polaromonas sp. (strain JS666 / ATCC BAA-500)).